We begin with the raw amino-acid sequence, 726 residues long: Kinesin-like protein KIN-10B (726 aa).

3 disordered regions span residues Met-1–Ala-20, Ala-60–Lys-82, and Lys-402–Arg-423. Residues Gly-15–Val-359 enclose the Kinesin motor domain. The segment covering Phe-408 to Arg-423 has biased composition (polar residues).

This sequence belongs to the TRAFAC class myosin-kinesin ATPase superfamily. Kinesin family. KIN-10 subfamily.

The sequence is that of Kinesin-like protein KIN-10B from Oryza sativa subsp. japonica (Rice).